The sequence spans 163 residues: Cyanate hydratase (163 aa).

Active-site residues include Arg103, Glu106, and Ser129.

This sequence belongs to the cyanase family.

The catalysed reaction is cyanate + hydrogencarbonate + 3 H(+) = NH4(+) + 2 CO2. Its function is as follows. Catalyzes the reaction of cyanate with bicarbonate to produce ammonia and carbon dioxide. The chain is Cyanate hydratase from Ajellomyces capsulatus (strain H143) (Darling's disease fungus).